The chain runs to 689 residues: MNFENLLIELGTEELPPKSLRKLAESFLANFTEELTKADLAFSSAVWYAAPRRLAINVTELALAQADKIVEKRGPAVSSAFDAEGKPTKAAEGWARGNGITVEQAERLVTDKGEWLVHNAKVEGVETKSLIAAMAQRALDKLPIPKPMRWGNNKTQFIRPVHTATILLGSELIEGELLGIKSARTVRGHRFMGLKQFELAHADHYLADLKEKGKVIADYESRKALIKADAEKAAAKIGGTADIEDSLLEEVASLVEWPVVLTASFEEKFLSVPSEALVYTMKGDQKYFPVFDDAGKLLPNFIFVANIESKDPAQIISGNEKVVRPRLADAEFFFNTDKKHTLESRLPSLETVLFQQQLGTLKDKVNRISALAAFIAEQTGANAVDAARAGLLSKTDLMTNMVMEFTDTQGTMGMHYARLDGETEAVAVAMEEQYKPKFSGDTVPSAGVSCAVALADKLDTLVGIFGIGQAPKGAADPFALRRAAIGVLRIIVENKLPLDLVTLIAKAQELHGTHLSNVNASDEVLEFLMARFRAWYQDKGIGVDVILAVLARRPTRPADFDSRINAVSHFRSLEASGALAAANKRVSNILAKVEGALPTTIDASLLTEAAEQALAAKLNELQPQLAPLFANADYQQALTLLAGLRESVDQFFEDVMVMADDEALKNNRLALLNNLREQFLHVADISLLQ.

It belongs to the class-II aminoacyl-tRNA synthetase family. In terms of assembly, tetramer of two alpha and two beta subunits.

Its subcellular location is the cytoplasm. The catalysed reaction is tRNA(Gly) + glycine + ATP = glycyl-tRNA(Gly) + AMP + diphosphate. In Shewanella sp. (strain W3-18-1), this protein is Glycine--tRNA ligase beta subunit.